The primary structure comprises 347 residues: 4-hydroxy-2-oxovalerate aldolase 1 (347 aa).

A Pyruvate carboxyltransferase domain is found at valine 8–methionine 261. Catalysis depends on histidine 20, which acts as the Proton acceptor. Substrate contacts are provided by serine 171 and histidine 200. Histidine 200 and histidine 202 together coordinate Mn(2+). A substrate-binding site is contributed by tyrosine 291.

Belongs to the 4-hydroxy-2-oxovalerate aldolase family.

It catalyses the reaction (S)-4-hydroxy-2-oxopentanoate = acetaldehyde + pyruvate. This Metapseudomonas furukawaii (Pseudomonas furukawaii) protein is 4-hydroxy-2-oxovalerate aldolase 1 (salH).